Reading from the N-terminus, the 437-residue chain is Transcription factor E2F2 (437 aa).

Residues 65 to 105 (ATPHGPEGQVVRCLPAGRLPAKRKLDLEGIGRPVVPEFPTP) are cyclin A/CDK2 binding. A DNA-binding region spans residues 107-196 (GKCIRVDGLP…KNNIQWVGRG (90 aa)). Residues 155 to 176 (LNWAAEVLDVQKRRIYDITNVL) form a leucine-zipper region. The DEF box motif lies at 160–196 (EVLDVQKRRIYDITNVLEGIQLIRKKAKNNIQWVGRG). The tract at residues 197 to 289 (MFEDPTRPGK…PDRTEDNLQI (93 aa)) is dimerization. The segment at 307–368 (VQEPDSPSEE…APPPPSLVPL (62 aa)) is disordered. Residues 315–330 (EEPLPSTSTLCPSPDS) show a composition bias toward low complexity. Residues 351–365 (APAPTPQQAPPPPSL) are compositionally biased toward pro residues. The interval 359–437 (APPPPSLVPL…SYDLGDLLIN (79 aa)) is transactivation. A retinoblastoma protein binding region spans residues 410–427 (DDYLWGLEAGEGISDLFD).

Belongs to the E2F/DP family. In terms of assembly, component of the DRTF1/E2F transcription factor complex. Forms heterodimers with DP family members. The E2F2 complex binds specifically hypophosphorylated retinoblastoma protein RB1. During the cell cycle, RB1 becomes phosphorylated in mid-to-late G1 phase, detaches from the DRTF1/E2F complex, rendering E2F transcriptionally active. Viral oncoproteins, notably E1A, T-antigen and HPV E7, are capable of sequestering RB1, thus releasing the active complex. Binds EAPP. Post-translationally, phosphorylated by CDK2 and cyclin A-CDK2 in the S-phase. As to expression, highest level of expression is found in placenta, low levels are found in lung. Found as well in many immortalized cell lines derived from tumor samples.

Its subcellular location is the nucleus. Transcription activator that binds DNA cooperatively with DP proteins through the E2 recognition site, 5'-TTTC[CG]CGC-3' found in the promoter region of a number of genes whose products are involved in cell cycle regulation or in DNA replication. The DRTF1/E2F complex functions in the control of cell-cycle progression from g1 to s phase. E2F2 binds specifically to RB1 in a cell-cycle dependent manner. The sequence is that of Transcription factor E2F2 (E2F2) from Homo sapiens (Human).